A 186-amino-acid chain; its full sequence is dCTP deaminase (186 aa).

Residue lysine 107–arginine 112 coordinates dCTP. Catalysis depends on glutamate 133, which acts as the Proton donor/acceptor. Residues glutamine 152, tyrosine 166, and glutamine 176 each coordinate dCTP.

Belongs to the dCTP deaminase family. In terms of assembly, homotrimer.

The enzyme catalyses dCTP + H2O + H(+) = dUTP + NH4(+). Its pathway is pyrimidine metabolism; dUMP biosynthesis; dUMP from dCTP (dUTP route): step 1/2. Functionally, catalyzes the deamination of dCTP to dUTP. The protein is dCTP deaminase of Chloroflexus aurantiacus (strain ATCC 29366 / DSM 635 / J-10-fl).